The primary structure comprises 424 residues: CinA-like protein (424 aa).

This sequence belongs to the CinA family.

This is CinA-like protein from Prochlorococcus marinus (strain MIT 9312).